The sequence spans 350 residues: Dihydroorotate dehydrogenase (quinone) (350 aa).

FMN is bound by residues 67–71 (AGFDK) and glycine 91. Lysine 71 contacts substrate. 116–120 (NRMGF) contributes to the substrate binding site. Asparagine 144 and asparagine 177 together coordinate FMN. Asparagine 177 serves as a coordination point for substrate. The active-site Nucleophile is the serine 180. Asparagine 182 is a substrate binding site. Lysine 213 and threonine 241 together coordinate FMN. 242-243 (NT) is a binding site for substrate. The interval 249–268 (ASLHSDAADEEGGLSGAPIT) is disordered. Residues glycine 264, glycine 291, and 312-313 (YT) each bind FMN.

This sequence belongs to the dihydroorotate dehydrogenase family. Type 2 subfamily. As to quaternary structure, monomer. Requires FMN as cofactor.

The protein localises to the cell membrane. It carries out the reaction (S)-dihydroorotate + a quinone = orotate + a quinol. The protein operates within pyrimidine metabolism; UMP biosynthesis via de novo pathway; orotate from (S)-dihydroorotate (quinone route): step 1/1. Catalyzes the conversion of dihydroorotate to orotate with quinone as electron acceptor. The sequence is that of Dihydroorotate dehydrogenase (quinone) from Natronomonas pharaonis (strain ATCC 35678 / DSM 2160 / CIP 103997 / JCM 8858 / NBRC 14720 / NCIMB 2260 / Gabara) (Halobacterium pharaonis).